Reading from the N-terminus, the 391-residue chain is Tyrosine recombinase XerC-like (391 aa).

A Core-binding (CB) domain is found at 64 to 148; the sequence is VTLGDLMHTW…FLKTFFNYAV (85 aa). In terms of domain architecture, Tyr recombinase spans 175–384; sequence TEIETFSDEE…IPKQKTNAVE (210 aa). Catalysis depends on residues Arg-210, Lys-244, His-335, Arg-338, and His-361. Tyr-371 functions as the O-(3'-phospho-DNA)-tyrosine intermediate in the catalytic mechanism.

The protein belongs to the 'phage' integrase family.

It localises to the cytoplasm. Site-specific tyrosine recombinase, which acts by catalyzing the cutting and rejoining of the recombining DNA molecules. In Caldanaerobacter subterraneus subsp. tengcongensis (strain DSM 15242 / JCM 11007 / NBRC 100824 / MB4) (Thermoanaerobacter tengcongensis), this protein is Tyrosine recombinase XerC-like.